The sequence spans 63 residues: Large ribosomal subunit protein uL29 (63 aa).

The protein belongs to the universal ribosomal protein uL29 family.

The protein is Large ribosomal subunit protein uL29 of Alcanivorax borkumensis (strain ATCC 700651 / DSM 11573 / NCIMB 13689 / SK2).